Consider the following 601-residue polypeptide: MRAVHLLALGAGLAAASPALANESVLKGVANPAEQVLQTVDYANTRYSKLDQINASNVKNLQVAWTFSTGVLRGHEGSPLVVGNIMYVHTPFPNIVYALDLDQGAKIVWKYEPKQDPSVIPVMCCDTVNRGLAYADGAILLHQADTTLVSLDAKSGKVNWSVKNGDPSKGETNTATVLPVKDKVIVGISGGEFGVQCHVTAYDLKSGKKVWRGYSIGPDDQLIVDPEKTTSLGKPIGKDSSLKTWEGDQWKTGGGCTWGWFSYDPKLDLMYYGSGNPSTWNPKQRPGDNKWSMTIWARNPDTGMAKWVYQMTPHDEWDFDGINEMILTDQKFDGKDRPLLTHFDRNGFGYTLDRATGEVLVAEKFDPVVNWATKVDLDKGSKTYGRPLVVSKYSTEQNGEDVNSKGICPAALGTKDQQPAAFSPKTGLFYVPTNHVCMDYEPFRVTYTPGQPYVGATLSMYPAPGSHGGMGNFIAWDNLQGKIKWSNPEQFSAWGGALATAGDVVFYGTLEGFLKAVDSKTGKELYKFKTPSGIIGNVMTYEHKGKQHVAVLSGVGGWAGIGLAAGLTDPNAGLGAVGGYAALSSYTNLGGQLTVFSLPNN.

An N-terminal signal peptide occupies residues methionine 1–alanine 21. The cysteines at positions 124 and 125 are disulfide-linked. Pyrroloquinoline quinone-binding residues include arginine 130, threonine 174, serine 189, glycine 190, and glycine 191. Glutamate 192 provides a ligand contact to La(3+). The cysteines at positions 197 and 256 are disulfide-linked. Tryptophan 258 is a pyrroloquinoline quinone binding site. Asparagine 276, aspartate 318, and aspartate 320 together coordinate La(3+). Residue aspartate 318 is the Proton acceptor of the active site. Arginine 345 is a binding site for pyrroloquinoline quinone. A disulfide bond links cysteine 408 and cysteine 437. Pyrroloquinoline quinone contacts are provided by tryptophan 494 and tryptophan 558.

The protein belongs to the bacterial PQQ dehydrogenase family. Homodimer. It depends on La(3+) as a cofactor. Requires Nd(3+) as cofactor. Pyrroloquinoline quinone serves as cofactor.

It is found in the periplasm. The catalysed reaction is 2 Fe(III)-[cytochrome cL] + methanol = 2 Fe(II)-[cytochrome cL] + formaldehyde + 2 H(+). Its function is as follows. Catalyzes the oxidation of methanol to formaldehyde, but only in the presence of lanthanides (Ln). Contributes to methanol metabolism when La(3+) is present in the natural environment of the bacterium, allowing bacterial growth with methanol as carbon and energy source. Thereby is an essential enzyme for Ln-dependent methylotrophy. Uses a specific cytochrome cL (XoxG), encoded by the adjacent gene in the locus, as electron acceptor. Also plays a role in the transcriptional regulation of the mxa and xox1 operons, most likely acting as a lanthanide sensory module. Is also able to oxidize formaldehyde to formate in vitro, but this activity does not occur in vivo. The chain is Lanthanide-dependent methanol dehydrogenase from Methylorubrum extorquens (strain ATCC 14718 / DSM 1338 / JCM 2805 / NCIMB 9133 / AM1) (Methylobacterium extorquens).